The following is a 624-amino-acid chain: Kelch-like ECH-associated protein 1 (624 aa).

Cys-38 carries the post-translational modification S-(2-succinyl)cysteine. The 73-residue stretch at 77-149 (CDVTLQVKYQ…AYTASISMGE (73 aa)) folds into the BTB domain. Arg-135 is covalently cross-linked (N5-[4-(S-L-cysteinyl)-5-methyl-1H-imidazol-2-yl]-L-ornithine (Arg-Cys) (interchain with C-151 in KEAP1)). S-(2-succinyl)cysteine occurs at positions 151 and 241. S-(2,3-dicarboxypropyl)cysteine; alternate is present on Cys-151. S-nitrosocysteine; alternate is present on Cys-151. Residue Cys-151 forms an N5-[4-(S-L-cysteinyl)-5-methyl-1H-imidazol-2-yl]-L-ornithine (Cys-Arg) (interchain with R-135 in KEAP1) linkage. Positions 184–286 (AIGIANFAEQ…TPNFLQMQLQ (103 aa)) constitute a BACK domain. S-(2,3-dicarboxypropyl)cysteine occurs at positions 257 and 273. S-(2-succinyl)cysteine occurs at positions 288 and 319. Cys-288 is subject to S-(2,3-dicarboxypropyl)cysteine; alternate. 6 Kelch repeats span residues 327–372 (LIYT…VVGG), 373–423 (LLYA…VIDG), 424–470 (HIYA…VLNR), 471–517 (LLYA…VLHN), 518–564 (CIYA…VHQG), and 565–611 (RIYV…VTME). Cys-434 is subject to S-cGMP-cysteine. At Cys-613 the chain carries S-(2-succinyl)cysteine.

This sequence belongs to the KEAP1 family. In terms of assembly, component of the BCR(KEAP1) E3 ubiquitin ligase complex, at least composed of 2 molecules of CUL3, 2 molecules of KEAP1, and RBX1. Interacts with NFE2L2/NRF2; the interaction is direct. Forms a ternary complex with NFE2L2/NRF2 and PGAM5. Interacts with (phosphorylated) SQSTM1/p62; the interaction is direct and inactivates the BCR(KEAP1) complex by sequestering it in inclusion bodies, promoting its degradation. Interacts with NFE2L1. Interacts with BPTF and PTMA. Interacts with MAP1LC3B. Interacts indirectly with ENC1. Interacts with SESN1 and SESN2. Interacts with HSP90AA1 and HSP90AB1. Interacts with PGCKA1; this interaction prevents the ubiquitination of KEAP1 by TRIM25, thus protecting KEAP1 from degradation. Post-translationally, non-enzymatic covalent modifications of reactive cysteines by electrophile metabolites inactivate the BCR(KEAP1) complex. Accumulation of fumarate promotes the formation of cysteine S-succination (S-(2-succinyl)cysteine), leading to inactivate the BCR(KEAP1) complex and promote NFE2L2/NRF2 nuclear accumulation and activation. Nitric oxide-dependent 8-Nitro-cGMP formation promotes cysteine guanylation (S-cGMP-cysteine), leading to NFE2L2/NRF2 nuclear accumulation and activation. Itaconate, an anti-inflammatory metabolite generated in response to lipopolysaccharide, alkylates cysteines, activating NFE2L2/NRF2. Methylglyoxal, a reactive metabolite that accumulates when the glycolytic enzyme PGK1 is inhibited, promotes formation of a methylimidazole cross-link between proximal Cys-151 and Arg-135 on another KEAP1 molecule, resulting in an inactive dimer that inactivates the BCR(KEAP1) complex. In terms of processing, degraded via a proteasomal-independent process during selective autophagy: interaction with phosphorylated SQSTM1/p62 sequesters KEAP1 in inclusion bodies, leading to its degradation. Auto-ubiquitinated by the BCR(KEAP1) complex. Quinone-induced oxidative stress, but not sulforaphane, increases its ubiquitination. Ubiquitination and subsequent degradation is most pronounced following prolonged exposure of cells to oxidative stress, particularly in glutathione-deficient cells that are highly susceptible to oxidative stress. Deubiquitinated by USP25; leading to stabilization. Ubiquitinated by TRIM25; leading to degradation upon ER stress.

Its subcellular location is the cytoplasm. The protein resides in the nucleus. It participates in protein modification; protein ubiquitination. Its activity is regulated as follows. Ubiquitin ligase activity of the BCR(KEAP1) complex is inhibited by oxidative stress and electrophile metabolites such as sulforaphane. Electrophile metabolites react with reactive cysteine residues in KEAP1 and trigger non-enzymatic covalent modifications of these cysteine residues, leading to inactivate the ubiquitin ligase activity of the BCR(KEAP1) complex. Selective autophagy also inactivates the BCR(KEAP1) complex via interaction between KEAP1 and SQSTM1/p62, which sequesters the complex in inclusion bodies and promotes its degradation. In terms of biological role, substrate-specific adapter of a BCR (BTB-CUL3-RBX1) E3 ubiquitin ligase complex that regulates the response to oxidative stress by targeting NFE2L2/NRF2 for ubiquitination. KEAP1 acts as a key sensor of oxidative and electrophilic stress: in normal conditions, the BCR(KEAP1) complex mediates ubiquitination and degradation of NFE2L2/NRF2, a transcription factor regulating expression of many cytoprotective genes. In response to oxidative stress, different electrophile metabolites trigger non-enzymatic covalent modifications of highly reactive cysteine residues in KEAP1, leading to inactivate the ubiquitin ligase activity of the BCR(KEAP1) complex, promoting NFE2L2/NRF2 nuclear accumulation and expression of phase II detoxifying enzymes. In response to selective autophagy, KEAP1 is sequestered in inclusion bodies following its interaction with SQSTM1/p62, leading to inactivation of the BCR(KEAP1) complex and activation of NFE2L2/NRF2. The BCR(KEAP1) complex also mediates ubiquitination of SQSTM1/p62, increasing SQSTM1/p62 sequestering activity and degradation. The BCR(KEAP1) complex also targets BPTF and PGAM5 for ubiquitination and degradation by the proteasome. This is Kelch-like ECH-associated protein 1 from Pongo abelii (Sumatran orangutan).